The chain runs to 145 residues: Flagellar assembly factor FliW (145 aa).

Belongs to the FliW family. As to quaternary structure, interacts with translational regulator CsrA and flagellin(s).

The protein localises to the cytoplasm. Functionally, acts as an anti-CsrA protein, binds CsrA and prevents it from repressing translation of its target genes, one of which is flagellin. Binds to flagellin and participates in the assembly of the flagellum. This chain is Flagellar assembly factor FliW, found in Clostridium kluyveri (strain NBRC 12016).